Here is a 386-residue protein sequence, read N- to C-terminus: MNVHEYQAKELLRSYGVPVPNGIAAFTVEEAVDAAEQLSGPIKVVKAQIHAGGRGKAGGVKLAKSQEEVKEFATELLGKTLVTHQTGPEGKVIQRLLVEEGCAIDKEYYLGIVLDRVTGRVVIMGSSEGGMDIEEVAEATPEKIIKEVVDPAVGLQAFQARKLAFAMGVPVKLVNKFVGMVTKLYTFFVDKDCSIAEINPLVTTKDGDVLALDAKLNFDSNALYRHADVVALRDETEEDPREVEASKNDLNYIALDGNIGCLVNGAGLAMATMDIIKHFSGDPANFLDVGGGATKEKVTEAFKLILSDENVKGIFVNIFGGIMKCDVIAEGIVAATKEVGLELPLVVRLEGTNVDAGKQILKDSGLAITAATSMADGAEKIAALVK.

Positions 9 to 244 (KELLRSYGVP…ETEEDPREVE (236 aa)) constitute an ATP-grasp domain. Residues lysine 46, 53–55 (GRG), glutamate 99, cysteine 102, and glutamate 107 each bind ATP. The Mg(2+) site is built by asparagine 199 and aspartate 213. Residues asparagine 264 and 321 to 323 (GIM) each bind substrate.

Belongs to the succinate/malate CoA ligase beta subunit family. Heterotetramer of two alpha and two beta subunits. Mg(2+) serves as cofactor.

It carries out the reaction succinate + ATP + CoA = succinyl-CoA + ADP + phosphate. It catalyses the reaction GTP + succinate + CoA = succinyl-CoA + GDP + phosphate. It functions in the pathway carbohydrate metabolism; tricarboxylic acid cycle; succinate from succinyl-CoA (ligase route): step 1/1. Succinyl-CoA synthetase functions in the citric acid cycle (TCA), coupling the hydrolysis of succinyl-CoA to the synthesis of either ATP or GTP and thus represents the only step of substrate-level phosphorylation in the TCA. The beta subunit provides nucleotide specificity of the enzyme and binds the substrate succinate, while the binding sites for coenzyme A and phosphate are found in the alpha subunit. The sequence is that of Succinate--CoA ligase [ADP-forming] subunit beta from Exiguobacterium sibiricum (strain DSM 17290 / CCUG 55495 / CIP 109462 / JCM 13490 / 255-15).